The primary structure comprises 473 residues: Aspartyl aminopeptidase 1 (473 aa).

Zn(2+) is bound at residue H93. H168 provides a ligand contact to substrate. Positions 262, 298, 299, and 343 each coordinate Zn(2+). E298 lines the substrate pocket. Substrate contacts are provided by D343, H346, K371, and Y378. H437 lines the Zn(2+) pocket.

This sequence belongs to the peptidase M18 family. In terms of assembly, tetrahedron-shaped homododecamer built from six homodimers. Interacts with autophagy receptor Nbr1. It depends on Zn(2+) as a cofactor.

The protein resides in the cytoplasm. It is found in the vacuole lumen. It catalyses the reaction Release of an N-terminal aspartate or glutamate from a peptide, with a preference for aspartate.. In terms of biological role, aspartyl aminopeptidase that is able to remove aspartyl residue at N-terminus of angiotensin I. Also acts as a chaperone and efficiently suppressed the thermal aggregation of citrate synthase. This chain is Aspartyl aminopeptidase 1 (ape4), found in Schizosaccharomyces pombe (strain 972 / ATCC 24843) (Fission yeast).